Here is a 303-residue protein sequence, read N- to C-terminus: Methionyl-tRNA formyltransferase (303 aa).

Residue 110–113 coordinates (6S)-5,6,7,8-tetrahydrofolate; that stretch reads SLLP.

Belongs to the Fmt family.

The enzyme catalyses L-methionyl-tRNA(fMet) + (6R)-10-formyltetrahydrofolate = N-formyl-L-methionyl-tRNA(fMet) + (6S)-5,6,7,8-tetrahydrofolate + H(+). Functionally, attaches a formyl group to the free amino group of methionyl-tRNA(fMet). The formyl group appears to play a dual role in the initiator identity of N-formylmethionyl-tRNA by promoting its recognition by IF2 and preventing the misappropriation of this tRNA by the elongation apparatus. This is Methionyl-tRNA formyltransferase from Ehrlichia ruminantium (strain Welgevonden).